The following is a 387-amino-acid chain: Alpha-sarcoglycan (387 aa).

The signal sequence occupies residues 1–23; it reads MAAAVTWIPLLAGLLAGLRDTKA. Topologically, residues 24-293 are extracellular; that stretch reads QQTTLHLLVG…RDFLTDALVT (270 aa). Residues Asn174 and Asn246 are each glycosylated (N-linked (GlcNAc...) asparagine). A helical transmembrane segment spans residues 294–314; sequence LLVPLLVALLLTLLLAYIMCF. Topologically, residues 315–387 are cytoplasmic; it reads RREGRLKRDM…AQMPLILDQH (73 aa). Position 377 is a phosphoserine (Ser377).

The protein belongs to the sarcoglycan alpha/epsilon family. In terms of assembly, cross-link to form 2 major subcomplexes: one consisting of SGCB, SGCD and SGCG and the other consisting of SGCB and SGCD. The association between SGCB and SGCG is particularly strong while SGCA is loosely associated with the other sarcoglycans. Interacts with the syntrophin SNTA1. In terms of tissue distribution, striated muscle, both skeletal and cardiac.

It is found in the cell membrane. The protein localises to the sarcolemma. The protein resides in the cytoplasm. Its subcellular location is the cytoskeleton. Functionally, component of the sarcoglycan complex, a subcomplex of the dystrophin-glycoprotein complex which forms a link between the F-actin cytoskeleton and the extracellular matrix. The polypeptide is Alpha-sarcoglycan (Sgca) (Mus musculus (Mouse)).